The primary structure comprises 291 residues: ATP synthase gamma chain (291 aa).

Belongs to the ATPase gamma chain family. In terms of assembly, F-type ATPases have 2 components, CF(1) - the catalytic core - and CF(0) - the membrane proton channel. CF(1) has five subunits: alpha(3), beta(3), gamma(1), delta(1), epsilon(1). CF(0) has three main subunits: a, b and c.

Its subcellular location is the cell inner membrane. Its function is as follows. Produces ATP from ADP in the presence of a proton gradient across the membrane. The gamma chain is believed to be important in regulating ATPase activity and the flow of protons through the CF(0) complex. In Sulfurihydrogenibium sp. (strain YO3AOP1), this protein is ATP synthase gamma chain.